The sequence spans 474 residues: 3-isopropylmalate dehydratase large subunit (474 aa).

The interval 293-313 is disordered; it reads GTTPGQGIGITEEIPAPEDLP. Residues C348, C408, and C411 each coordinate [4Fe-4S] cluster.

Belongs to the aconitase/IPM isomerase family. LeuC type 1 subfamily. As to quaternary structure, heterodimer of LeuC and LeuD. It depends on [4Fe-4S] cluster as a cofactor.

The enzyme catalyses (2R,3S)-3-isopropylmalate = (2S)-2-isopropylmalate. The protein operates within amino-acid biosynthesis; L-leucine biosynthesis; L-leucine from 3-methyl-2-oxobutanoate: step 2/4. Catalyzes the isomerization between 2-isopropylmalate and 3-isopropylmalate, via the formation of 2-isopropylmaleate. The protein is 3-isopropylmalate dehydratase large subunit of Natronomonas pharaonis (strain ATCC 35678 / DSM 2160 / CIP 103997 / JCM 8858 / NBRC 14720 / NCIMB 2260 / Gabara) (Halobacterium pharaonis).